The primary structure comprises 236 residues: 2,3,4,5-tetrahydropyridine-2,6-dicarboxylate N-acetyltransferase (236 aa).

This sequence belongs to the transferase hexapeptide repeat family. DapH subfamily.

It carries out the reaction (S)-2,3,4,5-tetrahydrodipicolinate + acetyl-CoA + H2O = L-2-acetamido-6-oxoheptanedioate + CoA. It participates in amino-acid biosynthesis; L-lysine biosynthesis via DAP pathway; LL-2,6-diaminopimelate from (S)-tetrahydrodipicolinate (acetylase route): step 1/3. In terms of biological role, catalyzes the transfer of an acetyl group from acetyl-CoA to tetrahydrodipicolinate. This chain is 2,3,4,5-tetrahydropyridine-2,6-dicarboxylate N-acetyltransferase, found in Clostridium botulinum (strain Kyoto / Type A2).